Here is a 319-residue protein sequence, read N- to C-terminus: Myoblast determination protein 1 (319 aa).

A Peptide (Met-Gly) (interchain with G-Cter in ubiquitin) cross-link involves residue Met-1. Lys-104 carries the N6-methyllysine; by EHMT2 modification. The bHLH domain maps to 109 to 160; it reads DRRKAATMRERRRLSKVNEAFETLKRCTSSNPNQRLPKVEILRNAIRYIEGL. Disordered stretches follow at residues 174-221 and 266-319; these read AAAA…SGAR and APAL…YQVL. Composition is skewed to polar residues over residues 197–207 and 308–319; these read SDASSPRSNCS and ASANPNPIYQVL.

In terms of assembly, efficient DNA binding requires dimerization with another bHLH protein. Seems to form active heterodimers with ITF-2. Interacts with SUV39H1. Interacts with DDX5. Interacts with CHD2. Interacts with TSC22D3. Interacts with SETD3. Interacts with P-TEFB complex; promotes the transcriptional activity of MYOD1 through its CDK9-mediated phosphorylation. Interacts with CSRP3. Interacts with NUPR1. Post-translationally, phosphorylated by CDK9. This phosphorylation promotes its function in muscle differentiation. Acetylated by a complex containing EP300 and PCAF. The acetylation is essential to activate target genes. Conversely, its deacetylation by SIRT1 inhibits its function. In terms of processing, ubiquitinated on the N-terminus; which is required for proteasomal degradation. Post-translationally, methylation at Lys-104 by EHMT2/G9a inhibits myogenic activity.

It is found in the nucleus. Acts as a transcriptional activator that promotes transcription of muscle-specific target genes and plays a role in muscle differentiation. Together with MYF5 and MYOG, co-occupies muscle-specific gene promoter core region during myogenesis. Induces fibroblasts to differentiate into myoblasts. Interacts with and is inhibited by the twist protein. This interaction probably involves the basic domains of both proteins. The protein is Myoblast determination protein 1 (MYOD1) of Sus scrofa (Pig).